A 295-amino-acid chain; its full sequence is Methionine aminopeptidase (295 aa).

H62 serves as a coordination point for substrate. D82, D93, and H153 together coordinate a divalent metal cation. H161 serves as a coordination point for substrate. E187 and E280 together coordinate a divalent metal cation.

This sequence belongs to the peptidase M24A family. Methionine aminopeptidase archaeal type 2 subfamily. As to quaternary structure, monomer. It depends on Co(2+) as a cofactor. Zn(2+) is required as a cofactor. Mn(2+) serves as cofactor. Requires Fe(2+) as cofactor.

The catalysed reaction is Release of N-terminal amino acids, preferentially methionine, from peptides and arylamides.. Its function is as follows. Removes the N-terminal methionine from nascent proteins. The N-terminal methionine is often cleaved when the second residue in the primary sequence is small and uncharged (Met-Ala-, Cys, Gly, Pro, Ser, Thr, or Val). This chain is Methionine aminopeptidase, found in Pyrococcus horikoshii (strain ATCC 700860 / DSM 12428 / JCM 9974 / NBRC 100139 / OT-3).